The primary structure comprises 264 residues: Thiazole synthase (264 aa).

Lysine 98 acts as the Schiff-base intermediate with DXP in catalysis. 1-deoxy-D-xylulose 5-phosphate-binding positions include glycine 159, 185 to 186, and 207 to 208; these read AG and AS. Residues 243–264 are disordered; that stretch reads HFAEASSPPEGRAHLDPERPAF. Over residues 253–264 the composition is skewed to basic and acidic residues; the sequence is GRAHLDPERPAF.

This sequence belongs to the ThiG family. Homotetramer. Forms heterodimers with either ThiH or ThiS.

It localises to the cytoplasm. It catalyses the reaction [ThiS sulfur-carrier protein]-C-terminal-Gly-aminoethanethioate + 2-iminoacetate + 1-deoxy-D-xylulose 5-phosphate = [ThiS sulfur-carrier protein]-C-terminal Gly-Gly + 2-[(2R,5Z)-2-carboxy-4-methylthiazol-5(2H)-ylidene]ethyl phosphate + 2 H2O + H(+). It functions in the pathway cofactor biosynthesis; thiamine diphosphate biosynthesis. Its function is as follows. Catalyzes the rearrangement of 1-deoxy-D-xylulose 5-phosphate (DXP) to produce the thiazole phosphate moiety of thiamine. Sulfur is provided by the thiocarboxylate moiety of the carrier protein ThiS. In vitro, sulfur can be provided by H(2)S. This is Thiazole synthase from Streptomyces avermitilis (strain ATCC 31267 / DSM 46492 / JCM 5070 / NBRC 14893 / NCIMB 12804 / NRRL 8165 / MA-4680).